Reading from the N-terminus, the 226-residue chain is Apoptosis regulator OPG045 (226 aa).

The protein belongs to the orthopoxvirus OPG045 family. As to quaternary structure, homodimer. Interacts with host pro-apoptotic protein BCL2L11 (via BH3 domain). Interacts with host NLRP1. Interacts with host BAK.

Its subcellular location is the host mitochondrion outer membrane. It is found in the host cytoplasm. Functionally, plays a role in evading host innate immune response by inhibiting host inflammasome activation. Interacts with and inhibits NLR-mediated interleukin-1 beta/IL1B production in infected cells. At the host mitochondria outer membrane, interacts with the BH3 domain of host BAK and prevents BAK from binding active BAX. In turn, host apoptosis is inhibited. In Vaccinia virus (strain Copenhagen) (VACV), this protein is Apoptosis regulator OPG045 (OPG045).